The primary structure comprises 218 residues: MNLASISQSYMSHNENERSIVPYIPPPYHPTAPALAVSASQMETMSLGILNQAMSSSAGASGALKDEKAAYGAVAEALRDPEPIRKIKRQVGIQTLKTLKVELSGMRRKKLILKIIMFICANVTMATSLVGGMSIVDEDIAKHLAFDGKGDWVSKTVHGLNLLCTTMLLAANKISEKVREEIARTKRDIAKRQSYVSAATMSWDGDSVTQLRDVKYGD.

It belongs to the orbivirus NS3 family.

Functionally, may play a role in the release of virions from infected cells. The polypeptide is Non-structural protein NS3 (Segment-10) (Camelus dromedarius (Dromedary)).